Here is a 615-residue protein sequence, read N- to C-terminus: MSDIIHLLPDHIANQIAAGEVIQRPASVVKELVENAVDAGASNIQVNIKDAGKTLIQVIDDGKGMSETDARMAFERHATSKISTAEDLFSLHTMGFRGEALASIAAVAHIELRTRARGTELGTCLSIAGSNLESIEPEACNEGSIFSVKNLFFNVPARRKFLKSNETEFRNIINEFERIALVNPQVGMSLYHNDAEIFNLPESGLRQRIINIYGKSLNQKLLSLDAQSSMVTISGFVGRPDSAKKRGALQFFFVNGRYMKHPYFHKAIMQAYEQLIPAGDMPNYFVYFTLDPSSIDVNIHPTKTEIKFENEQPIWQILMAATREALAKSSAIPTIDFDVEDAIDIPVYNPVKKSEPSTYKAPKVQVDSSYNPFDTTSYKKPEFDWSKLYQGFENDRVAVQRESETFEDAPIEELPAEASDPEKLFTEVSNPCYQYKGRYIVTSLKSGLAIIDQHRAHVRILFDQYLSNIRQQQGVSQQVLFPEIVEFTAAEAAVLPSLLEDLCFVGFDLSNLGNDNYAINGLPAGIENLDPVNLVKDIVDRAIETGCAVHEKICEAIALSLAKAAAIRPGKSLSLEEMDHLIASLFSCSDSNLTPDGKTIISMLTDEELERRFKC.

This sequence belongs to the DNA mismatch repair MutL/HexB family.

Functionally, this protein is involved in the repair of mismatches in DNA. It is required for dam-dependent methyl-directed DNA mismatch repair. May act as a 'molecular matchmaker', a protein that promotes the formation of a stable complex between two or more DNA-binding proteins in an ATP-dependent manner without itself being part of a final effector complex. This is DNA mismatch repair protein MutL from Parabacteroides distasonis (strain ATCC 8503 / DSM 20701 / CIP 104284 / JCM 5825 / NCTC 11152).